The following is a 278-amino-acid chain: NH(3)-dependent NAD(+) synthetase (278 aa).

Position 43-50 (43-50) interacts with ATP; sequence GISGGVDS. D49 is a binding site for Mg(2+). Deamido-NAD(+) is bound at residue R146. T166 contacts ATP. Mg(2+) is bound at residue E171. Deamido-NAD(+) is bound by residues K179 and D186. ATP contacts are provided by K195 and T217. Residue 266–267 coordinates deamido-NAD(+); it reads HK.

It belongs to the NAD synthetase family. Homodimer.

The enzyme catalyses deamido-NAD(+) + NH4(+) + ATP = AMP + diphosphate + NAD(+) + H(+). The protein operates within cofactor biosynthesis; NAD(+) biosynthesis; NAD(+) from deamido-NAD(+) (ammonia route): step 1/1. Functionally, catalyzes the ATP-dependent amidation of deamido-NAD to form NAD. Uses ammonia as a nitrogen source. This is NH(3)-dependent NAD(+) synthetase from Pseudoalteromonas translucida (strain TAC 125).